The following is a 225-amino-acid chain: NAD(P)H-quinone oxidoreductase subunit K, chloroplastic (225 aa).

Positions 43, 44, 108, and 139 each coordinate [4Fe-4S] cluster.

The protein belongs to the complex I 20 kDa subunit family. In terms of assembly, NDH is composed of at least 16 different subunits, 5 of which are encoded in the nucleus. The cofactor is [4Fe-4S] cluster.

Its subcellular location is the plastid. The protein localises to the chloroplast thylakoid membrane. The catalysed reaction is a plastoquinone + NADH + (n+1) H(+)(in) = a plastoquinol + NAD(+) + n H(+)(out). The enzyme catalyses a plastoquinone + NADPH + (n+1) H(+)(in) = a plastoquinol + NADP(+) + n H(+)(out). In terms of biological role, NDH shuttles electrons from NAD(P)H:plastoquinone, via FMN and iron-sulfur (Fe-S) centers, to quinones in the photosynthetic chain and possibly in a chloroplast respiratory chain. The immediate electron acceptor for the enzyme in this species is believed to be plastoquinone. Couples the redox reaction to proton translocation, and thus conserves the redox energy in a proton gradient. This Lemna minor (Common duckweed) protein is NAD(P)H-quinone oxidoreductase subunit K, chloroplastic.